The sequence spans 352 residues: MSDSPVTLPESIKLTEYSHGAGCGCKISPKVLSTILASQLPVFTDPNLLVGNQSRDDAAVYKLNDDIGIISTTDFFMPIVDDPFTFGRIAATNAISDIYAMGGTPIMAIAILGWPINKLPAEVAQQVVDGGRQACMEAGIMLAGGHSIDAPEPIFGLAVTGQIALTDLKQNDTAKAGDRLYLTKPIGIGILTTAQKQKKLQDEDSHIAVNAMCQLNTIGTTIAKISGVNALTDVTGFGLAGHLLEMCQGAKLTAKLKFDAVPLLPRALDYLALGCVPGGTHRNYDSYGEHLPELSEHQKAILCDPQTSGGLLVAVSAEAEAELIALLDAHHIAPICIGSLETPTTEANVVLY.

The active site involves Cys-23. ATP-binding positions include Lys-26 and 54–56 (SRD). Asp-57 contributes to the Mg(2+) binding site. Residues Asp-74, Asp-97, and 145 to 147 (GHS) contribute to the ATP site. Asp-97 lines the Mg(2+) pocket. Asp-233 contacts Mg(2+).

It belongs to the selenophosphate synthase 1 family. Class I subfamily. In terms of assembly, homodimer. Mg(2+) serves as cofactor.

The enzyme catalyses hydrogenselenide + ATP + H2O = selenophosphate + AMP + phosphate + 2 H(+). Synthesizes selenophosphate from selenide and ATP. This chain is Selenide, water dikinase, found in Shewanella baltica (strain OS185).